Here is a 155-residue protein sequence, read N- to C-terminus: Mediator of RNA polymerase II transcription subunit 10 (155 aa).

Positions 54–80 (SSHTQSHAPDADTAQANPSDPPISTIE) are disordered.

Belongs to the Mediator complex subunit 10 family. As to quaternary structure, component of the Mediator complex.

The protein resides in the nucleus. Component of the Mediator complex, a coactivator involved in the regulated transcription of nearly all RNA polymerase II-dependent genes. Mediator functions as a bridge to convey information from gene-specific regulatory proteins to the basal RNA polymerase II transcription machinery. Mediator is recruited to promoters by direct interactions with regulatory proteins and serves as a scaffold for the assembly of a functional preinitiation complex with RNA polymerase II and the general transcription factors. In Aspergillus terreus (strain NIH 2624 / FGSC A1156), this protein is Mediator of RNA polymerase II transcription subunit 10 (nut2).